The primary structure comprises 429 residues: Probable M18 family aminopeptidase 2 (429 aa).

Residues H82, H156, and H401 each contribute to the Zn(2+) site.

The protein belongs to the peptidase M18 family. It depends on Zn(2+) as a cofactor.

This Pseudomonas fluorescens (strain Pf0-1) protein is Probable M18 family aminopeptidase 2.